We begin with the raw amino-acid sequence, 284 residues long: Bifunctional protein FolD (284 aa).

Residues 166–168 (GAS) and Ile232 each bind NADP(+).

This sequence belongs to the tetrahydrofolate dehydrogenase/cyclohydrolase family. Homodimer.

The catalysed reaction is (6R)-5,10-methylene-5,6,7,8-tetrahydrofolate + NADP(+) = (6R)-5,10-methenyltetrahydrofolate + NADPH. It catalyses the reaction (6R)-5,10-methenyltetrahydrofolate + H2O = (6R)-10-formyltetrahydrofolate + H(+). Its pathway is one-carbon metabolism; tetrahydrofolate interconversion. Functionally, catalyzes the oxidation of 5,10-methylenetetrahydrofolate to 5,10-methenyltetrahydrofolate and then the hydrolysis of 5,10-methenyltetrahydrofolate to 10-formyltetrahydrofolate. In Pseudomonas fluorescens (strain ATCC BAA-477 / NRRL B-23932 / Pf-5), this protein is Bifunctional protein FolD.